A 576-amino-acid chain; its full sequence is Flagellin B (576 aa).

This sequence belongs to the bacterial flagellin family. Heteromer of FlaA and FlaB. Interacts with FliW. Interacts with FliS.

It localises to the secreted. Its subcellular location is the bacterial flagellum. Functionally, flagellin is the subunit protein which polymerizes to form the filaments of bacterial flagella. This is Flagellin B (flaB) from Campylobacter jejuni subsp. jejuni serotype O:6 (strain 81116 / NCTC 11828).